The following is a 210-amino-acid chain: Natriuretic peptide BM026 (210 aa).

The N-terminal stretch at 1-26 is a signal peptide; it reads MVGPSRLAGGGLLLLLLALLPVALDG. Residues 83–99 are natriuretic peptide domain 1; the sequence is CFGHKIDRISHSSGMGC. C83 and C99 form a disulfide bridge. The segment covering 122-134 has biased composition (basic and acidic residues); sequence ESKKSRAARDRMV. A disordered region spans residues 122–210; sequence ESKKSRAARD…QFNSKSSQVA (89 aa). The span at 140 to 150 shows a compositional bias: gly residues; sequence AGGGGGGGGGD. Positions 156-176 are enriched in basic and acidic residues; it reads ELAKKDQHNNCFGRRIDRISH. The interval 166-182 is natriuretic peptide domain 2; the sequence is CFGRRIDRISHSTDLGC. A disulfide bond links C166 and C182. Positions 201–210 are enriched in polar residues; it reads QFNSKSSQVA.

It belongs to the natriuretic peptide family. Expressed by the venom gland.

It is found in the secreted. In terms of biological role, natriuretic peptide that dose-dependently induces the rapid relaxation of rat aortic strips phenylephrine-precontracted. Acts by stimulating cGMP production in a dose-dependent manner (by probably activating NPR1 and/or NPR2). May also show potent hypotensive effects. This chain is Natriuretic peptide BM026, found in Bungarus multicinctus (Many-banded krait).